The sequence spans 627 residues: 2-oxoacid:ferredoxin oxidoreductase 1, subunit alpha (627 aa).

The short motif at 253 to 257 is the YPITP motif element; sequence YPITP. The substrate site is built by threonine 256 and arginine 344.

In terms of assembly, heterodimer composed of an alpha and a beta subunit.

It carries out the reaction a 2-oxocarboxylate + 2 oxidized [2Fe-2S]-[ferredoxin] + CoA = an acyl-CoA + 2 reduced [2Fe-2S]-[ferredoxin] + CO2 + H(+). Inhibited by low concentration of 4-fluoro-7-nitrobenzofurazan (NBD-F). Functionally, catalyzes the coenzyme A-dependent oxidative decarboxylation of different 2-oxoacids such as 2-oxoglutarate, pyruvate and 2-oxobutyrate to form their CoA derivatives. The chain is 2-oxoacid:ferredoxin oxidoreductase 1, subunit alpha from Sulfurisphaera tokodaii (strain DSM 16993 / JCM 10545 / NBRC 100140 / 7) (Sulfolobus tokodaii).